The sequence spans 163 residues: Protein MATERNALLY EXPRESSED GENE 5 (163 aa).

The RRM domain maps to 38–117 (STLYIEGLPA…DDVNVSAPAE (80 aa)). Disulfide bonds link Cys-140–Cys-162 and Cys-143–Cys-151.

The protein belongs to the MEG family. In terms of tissue distribution, ubiquitous.

This chain is Protein MATERNALLY EXPRESSED GENE 5 (MEG5), found in Zea mays (Maize).